Reading from the N-terminus, the 277-residue chain is Protein OPG166 (277 aa).

N-linked (GlcNAc...) asparagine; by host glycans are attached at residues asparagine 29 and asparagine 58. The next 5 helical transmembrane spans lie at 124 to 144 (TMLM…EIAY), 156 to 176 (GILQ…AFLF), 186 to 206 (IIGL…KVFS), 219 to 239 (LIIY…GLSL), and 247 to 267 (LLLS…LFLV).

Belongs to the orthopoxvirus OPG166 protein family.

The protein localises to the host membrane. Promotes, when overexpressed, the influx of extracellular Ca(2+), leading to membrane permeability and host cell necrosis. This chain is Protein OPG166 (OPG166), found in Cynomys gunnisoni (Gunnison's prairie dog).